The chain runs to 132 residues: MGQSKSKPREKKEEEKSTTTLVTKSKEKVMEKEAKQSDKESQPAESLLFATSKHSRPSSSSEDKPETKQRSSKKRSVIPQIIITRASNETLISYGIPDNDEQRTIREHADWGPYHRHRSPSTIAAYDVHNTE.

The segment at 1–60 (MGQSKSKPREKKEEEKSTTTLVTKSKEKVMEKEAKQSDKESQPAESLLFATSKHSRPSSS) is interaction with ATG16L1. The segment at 1–81 (MGQSKSKPRE…SKKRSVIPQI (81 aa)) is disordered. Residues 24 to 42 (KSKEKVMEKEAKQSDKESQ) show a composition bias toward basic and acidic residues. The interval 61–132 (SEDKPETKQR…IAAYDVHNTE (72 aa)) is interaction with VDAC2. A PQIIIT motif is present at residues 79–84 (PQIIIT). A Phosphoserine modification is found at S87. The segment at 110-132 (DWGPYHRHRSPSTIAAYDVHNTE) is disordered.

Interacts (via PQIIIT motif) with PPP3R2 and PPP3CC. Interacts with VDAC2. Interacts with ATG16L1 (via WD repeats). Interacts with PPP3R1, PPP3CA and PPP3CB. As to expression, predominantly expressed in the testis (at protein level). Expressed in the sperm midpiece (at protein level).

It localises to the cytoplasm. Its subcellular location is the cytosol. It is found in the nucleus. The protein localises to the mitochondrion. In terms of biological role, plays an important role in sperm motility and male fertility. Required for sperm midpiece flexibility and for the localization of sperm calcineurin to the mitochondria. Promotes mitophagy as well as acts as an autophagy mediator in male germline cells. Links damaged mitochondria to autophagosomes via its binding to the outer mitochondrial membrane protein VDAC2, as well as to key autophagy machinery component ATG16L1. The chain is Spermatogenesis-associated protein 33 (Spata33) from Mus musculus (Mouse).